We begin with the raw amino-acid sequence, 195 residues long: Large ribosomal subunit protein bL17 (195 aa).

Residues 132 to 195 form a disordered region; sequence ARGTRFAARK…TEAKDTKPES (64 aa). Positions 159 to 186 are enriched in low complexity; that stretch reads PTAAAVAAEAQAEQPTAEAVAADDAATT.

The protein belongs to the bacterial ribosomal protein bL17 family. Part of the 50S ribosomal subunit. Contacts protein L32.

This chain is Large ribosomal subunit protein bL17, found in Parafrankia sp. (strain EAN1pec).